A 281-amino-acid polypeptide reads, in one-letter code: MGTQGSPVKSYDYLLKFLLVGDSDVGKGEILESLQDGAAESPYAYSNGIDYKTTTILLDGRRVKLELWDTSGQGRFCTIFRSYSRGAQGILLVYDITNRWSFDGIDRWIKEIDEHAPGVPRILVGNRLHLAFKRQVPTEQARAYAEKNCMTFFEVSPLCNFNVIESFTELSRIVLMRHGMEKIWRPNRVFSLQDLCCRAIVSCTPVHLIDKLPLPVTIKSHLKSFSMANGMNAVMMHGRSYSLASGAGGSGSKGNSLKRSKSIRPPQSPPQNCSRSNCKIS.

GTP is bound by residues Ser23, Gly26, Lys27, and Ser46. The interval Ser41–Ile49 is switch-I. Residues Ser46 and Asp69 each contribute to the Mg(2+) site. GTP is bound by residues Gly72, Asn126, and Arg127. A switch-II region spans residues Gly72–Gln88. Residues Leu175 to Ala228 enclose the SOCS box domain. The disordered stretch occupies residues Ser245–Ser281. A compositionally biased stretch (polar residues) spans Pro270–Ser281. Cys273 carries the S-palmitoyl cysteine lipid modification. Residue Cys278 is the site of S-geranylgeranyl cysteine attachment.

It belongs to the small GTPase superfamily. Rab family. As to quaternary structure, component of the cullin-5-RING E3 ubiquitin-protein ligase complex (ECS(RAB40C) complex) composed of CUL5, Elongin BC (ELOB and ELOC), RNF7/RBX2 and RAB40C. Interacts with protein phosphatase 6 (PP6) complex components ANKRD28, ANKRD52, PPP6C, PP6R1 and PP6R2; the interaction leads to ANKRD28 ubiquitination and decreased PP6 activity. Interacts with DAB2IP; DAB2IP acts as a GAP for RAB40C. The cofactor is Mg(2+).

Its subcellular location is the cell membrane. The protein resides in the cytoplasm. It is found in the cytosol. It localises to the golgi apparatus membrane. It carries out the reaction GTP + H2O = GDP + phosphate + H(+). It functions in the pathway protein modification; protein ubiquitination. With respect to regulation, regulated by guanine nucleotide exchange factors (GEFs) which promote the exchange of bound GDP for free GTP. Regulated by GTPase activating proteins (GAPs) including DAB2IP, which increase the GTP hydrolysis activity. Inhibited by GDP dissociation inhibitors (GDIs). In terms of biological role, RAB40C small GTPase acts as substrate-recognition component of the ECS(RAB40C) E3 ubiquitin ligase complex which mediates the ubiquitination and subsequent proteasomal degradation of target proteins. The Rab40 subfamily belongs to the Rab family that are key regulators of intracellular membrane trafficking, from the formation of transport vesicles to their fusion with membranes. Rabs cycle between an inactive GDP-bound form and an active GTP-bound form that is able to recruit to membranes different sets of downstream effectors directly responsible for vesicle formation, movement, tethering and fusion. As part of the ECS(RAB40C) complex, mediates ANKRD28 ubiquitination and degradation, thereby inhibiting protein phosphatase 6 (PP6) complex activity and focal adhesion assembly during cell migration. Also negatively regulate lipid droplets accumulation in a GTP-dependent manner. The protein is Ras-related protein Rab-40C of Mus musculus (Mouse).